Reading from the N-terminus, the 205-residue chain is dTTP/UTP pyrophosphatase (205 aa).

Residue Asp-81 is the Proton acceptor of the active site.

Belongs to the Maf family. YhdE subfamily. A divalent metal cation is required as a cofactor.

It localises to the cytoplasm. It catalyses the reaction dTTP + H2O = dTMP + diphosphate + H(+). The enzyme catalyses UTP + H2O = UMP + diphosphate + H(+). In terms of biological role, nucleoside triphosphate pyrophosphatase that hydrolyzes dTTP and UTP. May have a dual role in cell division arrest and in preventing the incorporation of modified nucleotides into cellular nucleic acids. In Agathobacter rectalis (strain ATCC 33656 / DSM 3377 / JCM 17463 / KCTC 5835 / VPI 0990) (Eubacterium rectale), this protein is dTTP/UTP pyrophosphatase.